We begin with the raw amino-acid sequence, 376 residues long: MSDLVTKFESLIISKYPVSFTKEQSAQAAQWESVLKSGQIQPHLDQLNLVLRDNTFIVSTLYPTSTDVHVFEVALPLIKDLVASSKDVKSTYTTYRHILRWIDYMQNLLEVSSTDKLEINHDLDLPHEVIEKKKKAPAGGAADAAAKADEDVSKKAKKQDHPRGKPDEETLKKLREEAKAKKAAKKAANAKQQQEQQNKAPEKPKPSAIDFRVGFIQKAIKHPDADSLYVSTIDVGDEEGPRTVCSGLVKHFPLDAMQERYVVVVCNLKPVNMRGIKSTAMVLCGSNDDKVEFVEPPKDSKAGDKVFFEGFGDEAPMKQLNPKKKIWEHLQPHFTTNDGLEVIFKDEEEKDHPVRKLTNAKGESFKVASIANAQVR.

Residues 22-46 (KEQSAQAAQWESVLKSGQIQPHLDQ) form an interaction with methionyl-tRNA synthetase MES1 region. Interaction with glutamyl-tRNA synthetase GUS1 regions lie at residues 52-61 (RDNTFIVSTL) and 91-121 (TYTT…EINH). The tract at residues 133–206 (KKKAPAGGAA…QNKAPEKPKP (74 aa)) is disordered. Residues 146–180 (AKADEDVSKKAKKQDHPRGKPDEETLKKLREEAKA) show a composition bias toward basic and acidic residues. Residues 186–199 (KAANAKQQQEQQNK) show a composition bias toward low complexity. Residues 205–307 (KPSAIDFRVG…KDSKAGDKVF (103 aa)) form the tRNA-binding domain.

Belongs to the tRNA-aminoacylation cofactor ARC1 family. In terms of assembly, component of a yeast aminoacyl-tRNA synthase (aaRS) complex formed by methionyl-tRNA synthase MES1, glutamyl-tRNA synthase GUS1 and the tRNA aminoacylation cofactor ARC1 in a stoichiometric complex. Interacts (via N-ter) with MES1 (via N-ter) and GUS1 (via N-ter). Can also form a stable binary complex with either MES1 or GUS1 that is functional in terms of aminoacylation.

Its subcellular location is the cytoplasm. Binds to tRNA and functions as a cofactor for the methionyl-tRNA synthetase (MetRS) and glutamyl-tRNA synthetase (GluRS). Forms a complex with MetRS and GluRS and increases their affinity for cognate tRNAs due to the presence of a tRNA binding domain in its middle and C-terminal part. Binds specifically G4 quadruplex nucleic acid structures (these are four-stranded right-handed helices, stabilized by guanine base quartets). Also required for cytoplasmic confinement of the synthetases and tRNA. The sequence is that of tRNA-aminoacylation cofactor ARC1 (ARC1) from Saccharomyces cerevisiae (strain ATCC 204508 / S288c) (Baker's yeast).